Reading from the N-terminus, the 218-residue chain is DNA replication complex GINS protein psf3 (218 aa).

The segment covering 147 to 163 (GGGSSYHGRDGGGAGGK) has biased composition (gly residues). The disordered stretch occupies residues 147–182 (GGGSSYHGRDGGGAGGKGKGKATKDDNASNLGVGGA).

Belongs to the GINS3/PSF3 family. As to quaternary structure, component of the GINS complex which is a heterotetramer of div-26/sld5, drc-1/psf1, drc-2/psf2 and drc-3/psf3.

The protein resides in the nucleus. Functionally, the GINS complex plays an essential role in the initiation of DNA replication. This Neurospora crassa (strain ATCC 24698 / 74-OR23-1A / CBS 708.71 / DSM 1257 / FGSC 987) protein is DNA replication complex GINS protein psf3 (drc-3).